The primary structure comprises 523 residues: UDP-glucuronosyltransferase 3A2 (523 aa).

The first 22 residues, 1–22 (MAAHRRWLLMSFLFLEVILLEA), serve as a signal peptide directing secretion. At 23-487 (AKILTISTLS…QPWHEQYMLD (465 aa)) the chain is on the extracellular side. Asn52 is a glycosylation site (N-linked (GlcNAc...) asparagine). Residues 488-508 (VFLFLLGLMLGTLWLSVKVLV) form a helical membrane-spanning segment. Over 509–523 (AVTRYLSIATKVKEA) the chain is Cytoplasmic.

Belongs to the UDP-glycosyltransferase family. Highly expressed in kidney, while it is expressed at low levels in liver. Not detected in other tissues examined.

It localises to the membrane. The catalysed reaction is glucuronate acceptor + UDP-alpha-D-glucuronate = acceptor beta-D-glucuronoside + UDP + H(+). Functionally, UDP-glucuronosyltransferases catalyze phase II biotransformation reactions in which lipophilic substrates are conjugated with glucuronic acid to increase water solubility and enhance excretion. They are of major importance in the conjugation and subsequent elimination of potentially toxic xenobiotics and endogenous compounds. In Mus musculus (Mouse), this protein is UDP-glucuronosyltransferase 3A2 (Ugt3a2).